The sequence spans 483 residues: 6-phosphogluconate dehydrogenase, decarboxylating (483 aa).

Residues 10 to 15 (GLAVMG) and 33 to 35 (NRT) each bind NADP(+). The residue at position 38 (Lys-38) is an N6-acetyllysine. Ser-57 is subject to Phosphoserine. At Lys-59 the chain carries N6-acetyllysine. Residues 75-77 (VKA) and Asn-103 each bind NADP(+). Residues Asn-103 and 129–131 (SGG) each bind substrate. Ser-129 is modified (phosphoserine). Lys-184 serves as the catalytic Proton acceptor. Residue 187–188 (HN) coordinates substrate. Catalysis depends on Glu-191, which acts as the Proton donor. Positions 192, 261, and 288 each coordinate substrate. Lys-309 carries the N6-acetyllysine modification. Arg-447 and His-453 together coordinate substrate. Position 478-481 (478-481 (SSSY)) interacts with NADP(+).

Belongs to the 6-phosphogluconate dehydrogenase family. In terms of assembly, homodimer.

It is found in the cytoplasm. The enzyme catalyses 6-phospho-D-gluconate + NADP(+) = D-ribulose 5-phosphate + CO2 + NADPH. It functions in the pathway carbohydrate degradation; pentose phosphate pathway; D-ribulose 5-phosphate from D-glucose 6-phosphate (oxidative stage): step 3/3. In terms of biological role, catalyzes the oxidative decarboxylation of 6-phosphogluconate to ribulose 5-phosphate and CO(2), with concomitant reduction of NADP to NADPH. This chain is 6-phosphogluconate dehydrogenase, decarboxylating (PGD), found in Homo sapiens (Human).